The following is a 186-amino-acid chain: MSNVQNASRSSAFAAVEGDHWVESLDDGRHVLIRPLREEDRERERQFINRLSPATRHFRFLGEIKEASPALLDQLMDIDYQQSMAFVALVHEDGELREVGISRYAACCEEGQCECAVTIADDYQGLGLDAVLMRHLIDVARRNGFRQMYSVDSAANRAMRDLCCALGFVGQRDPDDSTQVIHRLAL.

Residues 31-186 (VLIRPLREED…STQVIHRLAL (156 aa)) enclose the N-acetyltransferase domain. Residues 117-119 (VTI), Gly-125, Asn-156, and 161-163 (DLC) each bind CoA.

Functionally, catalyzes the transfer of an acetyl group from acetyl coenzyme A (AcCoA) to an acceptor substrate and releases both CoA and the acetylated product. It prefers the antibiotic chloramphenicol. This Pseudomonas aeruginosa (strain ATCC 15692 / DSM 22644 / CIP 104116 / JCM 14847 / LMG 12228 / 1C / PRS 101 / PAO1) protein is Acetyltransferase PA5475.